Here is an 82-residue protein sequence, read N- to C-terminus: UPF0180 protein BT9727_1277 (82 aa).

It belongs to the UPF0180 family.

This is UPF0180 protein BT9727_1277 from Bacillus thuringiensis subsp. konkukian (strain 97-27).